Reading from the N-terminus, the 60-residue chain is Large ribosomal subunit protein uL30 (60 aa).

This sequence belongs to the universal ribosomal protein uL30 family. As to quaternary structure, part of the 50S ribosomal subunit.

The polypeptide is Large ribosomal subunit protein uL30 (Azoarcus sp. (strain BH72)).